Here is a 71-residue protein sequence, read N- to C-terminus: SRY-related protein LG27 (71 aa).

The HMG box DNA-binding region spans 1–68 (VKRPMNAFMV…KHMADYPNYK (68 aa)).

The protein localises to the nucleus. The protein is SRY-related protein LG27 of Eublepharis macularius (Leopard gecko).